A 677-amino-acid polypeptide reads, in one-letter code: Fermitin family homolog 1 (677 aa).

Positions 96 to 653 (MLRLRLPNLK…HEYIGGYIFL (558 aa)) constitute an FERM domain. Residues S170, S179, and S361 each carry the phosphoserine modification. In terms of domain architecture, PH spans 337–433 (ESEVDEIEAA…EVVPNVNVAE (97 aa)).

It belongs to the kindlin family. As to quaternary structure, interacts with the cytoplasmic domain of integrins ITGB1 and ITGB3.

The protein resides in the cytoplasm. The protein localises to the cytoskeleton. It is found in the cell junction. Its subcellular location is the focal adhesion. It localises to the cell projection. The protein resides in the ruffle membrane. Involved in cell adhesion. Contributes to integrin activation. When coexpressed with talin, potentiates activation of ITGA2B. Required for normal keratinocyte proliferation. Required for normal polarization of basal keratinocytes in skin, and for normal cell shape. Required for normal adhesion of keratinocytes to fibronectin and laminin, and for normal keratinocyte migration to wound sites. This chain is Fermitin family homolog 1 (FERMT1), found in Pongo abelii (Sumatran orangutan).